Reading from the N-terminus, the 421-residue chain is Phosphatidylinositol 5-phosphate 4-kinase type-2 gamma (421 aa).

N-acetylalanine is present on alanine 2. Residue serine 26 is modified to Phosphoserine. A PIPK domain is found at 43-420 (AADPLVGVFL…RFLDFIANIF (378 aa)). Residues 69 to 75 (VMLLPDD) are required for interaction with PIP5K1A. Serine 349 carries the post-translational modification Phosphoserine.

Interacts with PIP5K1A; the interaction inhibits PIP5K1A kinase activity. Post-translationally, phosphorylated, phosphorylation is induced by EGF.

It localises to the endoplasmic reticulum. The protein localises to the cytoplasm. The enzyme catalyses a 1,2-diacyl-sn-glycero-3-phospho-(1D-myo-inositol-5-phosphate) + ATP = a 1,2-diacyl-sn-glycero-3-phospho-(1D-myo-inositol-4,5-bisphosphate) + ADP + H(+). It catalyses the reaction 1,2-dihexadecanoyl-sn-glycero-3-phospho-(1D-myo-inositol-5-phosphate) + ATP = 1,2-dihexadecanoyl-sn-glycero-3-phospho-(1D-myo-inositol-4,5-bisphosphate) + ADP + H(+). It carries out the reaction 1,2-dihexadecanoyl-sn-glycero-3-phospho-(1D-myo-inositol-5-phosphate) + GTP = 1,2-dihexadecanoyl-sn-glycero-3-phospho-(1D-myo-inositol-4,5-bisphosphate) + GDP + H(+). In terms of biological role, phosphatidylinositol 5-phosphate 4-kinase with low enzymatic activity. May be a GTP sensor, has higher GTP-dependent kinase activity than ATP-dependent kinase activity. PIP4Ks negatively regulate insulin signaling through a catalytic-independent mechanism. They interact with PIP5Ks and suppress PIP5K-mediated PtdIns(4,5)P2 synthesis and insulin-dependent conversion to PtdIns(3,4,5)P3. The polypeptide is Phosphatidylinositol 5-phosphate 4-kinase type-2 gamma (Mus musculus (Mouse)).